Reading from the N-terminus, the 143-residue chain is Large-conductance mechanosensitive channel (143 aa).

The next 3 helical transmembrane spans lie at 21-41 (VGVI…ADII), 44-64 (VVGL…LGTV), and 86-106 (GNFI…FMMV).

Belongs to the MscL family. In terms of assembly, homopentamer.

It localises to the cell inner membrane. Functionally, channel that opens in response to stretch forces in the membrane lipid bilayer. May participate in the regulation of osmotic pressure changes within the cell. The sequence is that of Large-conductance mechanosensitive channel from Variovorax paradoxus (strain S110).